Consider the following 126-residue polypeptide: Fluoride-specific ion channel FluC (126 aa).

The next 4 membrane-spanning stretches (helical) occupy residues 5-25 (IAVI…FALW), 34-54 (WGTL…LAVF), 67-87 (LVIT…GEVV), and 95-115 (FGLA…LTWA). The Na(+) site is built by Gly-74 and Thr-77.

This sequence belongs to the fluoride channel Fluc/FEX (TC 1.A.43) family.

The protein resides in the cell inner membrane. The catalysed reaction is fluoride(in) = fluoride(out). Its activity is regulated as follows. Na(+) is not transported, but it plays an essential structural role and its presence is essential for fluoride channel function. Fluoride-specific ion channel. Important for reducing fluoride concentration in the cell, thus reducing its toxicity. The chain is Fluoride-specific ion channel FluC from Paracidovorax citrulli (strain AAC00-1) (Acidovorax citrulli).